We begin with the raw amino-acid sequence, 444 residues long: Adenylosuccinate synthetase (444 aa).

Residues 19-25 (GDEGKGK) and 47-49 (GHT) each bind GTP. Catalysis depends on Asp-20, which acts as the Proton acceptor. The Mg(2+) site is built by Asp-20 and Gly-47. IMP-binding positions include 20-23 (DEGK), 45-48 (NAGH), Thr-139, Arg-153, Gln-234, Thr-249, and Arg-317. Catalysis depends on His-48, which acts as the Proton donor. 313–319 (TVTGRPR) is a substrate binding site. Residues Arg-319, 345–347 (KLD), and 427–429 (STG) each bind GTP.

It belongs to the adenylosuccinate synthetase family. As to quaternary structure, homodimer. Mg(2+) is required as a cofactor.

It is found in the cytoplasm. It carries out the reaction IMP + L-aspartate + GTP = N(6)-(1,2-dicarboxyethyl)-AMP + GDP + phosphate + 2 H(+). It participates in purine metabolism; AMP biosynthesis via de novo pathway; AMP from IMP: step 1/2. Plays an important role in the de novo pathway of purine nucleotide biosynthesis. Catalyzes the first committed step in the biosynthesis of AMP from IMP. In Methylibium petroleiphilum (strain ATCC BAA-1232 / LMG 22953 / PM1), this protein is Adenylosuccinate synthetase.